Consider the following 351-residue polypeptide: Dihydroorotate dehydrogenase (quinone) (351 aa).

FMN-binding positions include 61–65 and T85; that span reads AGLDK. A substrate-binding site is contributed by K65. 110 to 114 serves as a coordination point for substrate; sequence NRMGF. Residues N139 and N172 each contribute to the FMN site. N172 lines the substrate pocket. S175 acts as the Nucleophile in catalysis. Substrate is bound at residue N177. FMN is bound by residues K217 and T245. 246–247 is a binding site for substrate; it reads NT. FMN-binding positions include G268, G297, and 318 to 319; that span reads YT.

Belongs to the dihydroorotate dehydrogenase family. Type 2 subfamily. As to quaternary structure, monomer. Requires FMN as cofactor.

The protein localises to the cell membrane. It catalyses the reaction (S)-dihydroorotate + a quinone = orotate + a quinol. It functions in the pathway pyrimidine metabolism; UMP biosynthesis via de novo pathway; orotate from (S)-dihydroorotate (quinone route): step 1/1. Its function is as follows. Catalyzes the conversion of dihydroorotate to orotate with quinone as electron acceptor. The sequence is that of Dihydroorotate dehydrogenase (quinone) from Xylella fastidiosa (strain 9a5c).